We begin with the raw amino-acid sequence, 215 residues long: Protein-L-isoaspartate O-methyltransferase (215 aa).

The active site involves Ser62.

This sequence belongs to the methyltransferase superfamily. L-isoaspartyl/D-aspartyl protein methyltransferase family.

Its subcellular location is the cytoplasm. The catalysed reaction is [protein]-L-isoaspartate + S-adenosyl-L-methionine = [protein]-L-isoaspartate alpha-methyl ester + S-adenosyl-L-homocysteine. Its function is as follows. Catalyzes the methyl esterification of L-isoaspartyl residues in peptides and proteins that result from spontaneous decomposition of normal L-aspartyl and L-asparaginyl residues. It plays a role in the repair and/or degradation of damaged proteins. The sequence is that of Protein-L-isoaspartate O-methyltransferase from Ruegeria sp. (strain TM1040) (Silicibacter sp.).